The chain runs to 115 residues: Urease subunit beta (115 aa).

Belongs to the urease beta subunit family. As to quaternary structure, heterotrimer of UreA (gamma), UreB (beta) and UreC (alpha) subunits. Three heterotrimers associate to form the active enzyme.

The protein localises to the cytoplasm. It catalyses the reaction urea + 2 H2O + H(+) = hydrogencarbonate + 2 NH4(+). It participates in nitrogen metabolism; urea degradation; CO(2) and NH(3) from urea (urease route): step 1/1. The polypeptide is Urease subunit beta (Arthrobacter sp. (strain FB24)).